The following is a 345-amino-acid chain: Phosphoribosylformylglycinamidine cyclo-ligase (345 aa).

It belongs to the AIR synthase family.

Its subcellular location is the cytoplasm. The catalysed reaction is 2-formamido-N(1)-(5-O-phospho-beta-D-ribosyl)acetamidine + ATP = 5-amino-1-(5-phospho-beta-D-ribosyl)imidazole + ADP + phosphate + H(+). It functions in the pathway purine metabolism; IMP biosynthesis via de novo pathway; 5-amino-1-(5-phospho-D-ribosyl)imidazole from N(2)-formyl-N(1)-(5-phospho-D-ribosyl)glycinamide: step 2/2. This Methanopyrus kandleri (strain AV19 / DSM 6324 / JCM 9639 / NBRC 100938) protein is Phosphoribosylformylglycinamidine cyclo-ligase.